A 471-amino-acid polypeptide reads, in one-letter code: Metal tolerance protein C1 (471 aa).

Topologically, residues 1-78 (MGIIRFQILN…PGEEGEKIFR (78 aa)) are cytoplasmic. The helical transmembrane segment at 79 to 99 (LGLTADIGLSVAKALTGYLCG) threads the bilayer. The Vacuolar portion of the chain corresponds to 100 to 101 (ST). A helical transmembrane segment spans residues 102-122 (AIIADAAHSVSDVVLSGVALV). Residues 123-144 (SYRAANVPKDKEHPYGHGKFET) are Cytoplasmic-facing. A helical transmembrane segment spans residues 145-165 (LGALGISAMLLATGSGIAWHA). Over 166 to 192 (LDLLSIALSAAPEVIHSGHHHGIDMNH) the chain is Vacuolar. A helical membrane pass occupies residues 193 to 213 (PILALTVTIASISIKEGLYWI). The Cytoplasmic segment spans residues 214 to 236 (TKRAGEKQGSGLMMANAWHHRSD). A helical transmembrane segment spans residues 237–257 (AISSLVALVGVGGSILGVNFL). At 258-423 (DPLAGLVVST…RITPHLLHSK (166 aa)) the chain is on the vacuolar side. Residues 424–444 (ILLQIVVAMPSTMSIQDVMIA) form a helical membrane-spanning segment. The Cytoplasmic segment spans residues 445–471 (AEHAEKEILKAAPNVARVSIQLSLNSE).

This sequence belongs to the cation diffusion facilitator (CDF) transporter (TC 2.A.4) family.

The protein resides in the vacuole membrane. Involved in sequestration of excess metal in the cytoplasm into vacuoles to maintain metal homeostasis. This is Metal tolerance protein C1 (MTPC1) from Arabidopsis thaliana (Mouse-ear cress).